The chain runs to 306 residues: MKNKRMLKIGMCVGILGLSVTSLEAFTGGALQVEAKEKTGQVKHKNQATHKEFSQLEKKFDARLGVYAIDTGTNQTISYRHNERFAFASTYKALAAGVLLQQNSIDTLNEVIKFTKEDLVDYSPVTEKHVDTGMKLGEIAEAAVRSSDNTAGNILFHKIGGPKGYEKALRQIGDRVTMSDRFETELNEAIPGDIRDTSTAKAIASNLKAFTVGNALPAEKRKILTEWMKGNATGDKLIRAGVPTDWIVGDKSGAGSYGTRNDIAIVWPPNRAPIIIAILSSKDEKEATYDNQLIAEAPEVIVKSLK.

The N-terminal stretch at 1-43 is a signal peptide; that stretch reads MKNKRMLKIGMCVGILGLSVTSLEAFTGGALQVEAKEKTGQVK. Ser-89 (acyl-ester intermediate) is an active-site residue. Residue Glu-185 is the Proton acceptor of the active site. Residue 251–253 coordinates substrate; sequence KSG.

Belongs to the class-A beta-lactamase family.

It catalyses the reaction a beta-lactam + H2O = a substituted beta-amino acid. In terms of biological role, this protein is a beta-lactamase with a substrate specificity for penicillins. The protein is Beta-lactamase 1 (blaCI) of Bacillus mycoides.